A 420-amino-acid polypeptide reads, in one-letter code: Phosphoglycerate kinase, cytosolic (420 aa).

The (2R)-3-phosphoglycerate site is built by Val23, Asp24, Phe25, Asn26, Arg39, Ser61, His62, Gly64, Arg65, Arg135, His171, and Arg172. Gly217 provides a ligand contact to ADP. Gly217 is a binding site for CDP. Lys219 is a binding site for (2R)-3-phosphoglycerate. Residue Lys219 participates in AMP binding. Asp222 is a CDP binding site. Asp222 lines the Mg(2+) pocket. Residues Lys223 and Gly241 each coordinate ADP. Residue Lys223 coordinates AMP. Lys223 provides a ligand contact to ATP. Gly241 is a binding site for CDP. Positions 242 and 314 each coordinate AMP. Residues Ala242 and Ala314 each contribute to the ATP site. ADP-binding residues include Ala314 and Asn338. Positions 339 and 344 each coordinate CDP. Residues Phe344, Glu345, Asp377, and Ser378 each contribute to the ADP site. Residue Glu345 coordinates AMP. Residues Glu345, Asp377, and Ser378 each coordinate ATP. Asp377 is a binding site for Mg(2+).

It belongs to the phosphoglycerate kinase family. Monomer. Mg(2+) is required as a cofactor.

It localises to the cytoplasm. The enzyme catalyses (2R)-3-phosphoglycerate + ATP = (2R)-3-phospho-glyceroyl phosphate + ADP. It functions in the pathway carbohydrate degradation; glycolysis; pyruvate from D-glyceraldehyde 3-phosphate: step 2/5. The chain is Phosphoglycerate kinase, cytosolic (C1PGK) from Trypanosoma congolense.